Here is a 713-residue protein sequence, read N- to C-terminus: Polyribonucleotide nucleotidyltransferase (713 aa).

Residues Asp-494 and Asp-500 each contribute to the Mg(2+) site. The 63-residue stretch at 561–623 (PSFSTMTIPK…EAVQSAEKRV (63 aa)) folds into the KH domain. One can recognise an S1 motif domain in the interval 633-702 (GDVYQGTVKS…KSGKYKLSRK (70 aa)).

It belongs to the polyribonucleotide nucleotidyltransferase family. Requires Mg(2+) as cofactor.

Its subcellular location is the cytoplasm. The enzyme catalyses RNA(n+1) + phosphate = RNA(n) + a ribonucleoside 5'-diphosphate. In terms of biological role, involved in mRNA degradation. Catalyzes the phosphorolysis of single-stranded polyribonucleotides processively in the 3'- to 5'-direction. The sequence is that of Polyribonucleotide nucleotidyltransferase from Amoebophilus asiaticus (strain 5a2).